The sequence spans 540 residues: Methionine--tRNA ligase 1 (540 aa).

Residues 10 to 20 carry the 'HIGH' region motif; that stretch reads PYANGSLHLGH. Positions 141, 144, 153, and 156 each coordinate Zn(2+). Positions 327–331 match the 'KMSKS' region motif; sequence KISTS. Thr330 lines the ATP pocket.

Belongs to the class-I aminoacyl-tRNA synthetase family. MetG type 1 subfamily. Monomer. It depends on Zn(2+) as a cofactor.

It localises to the cytoplasm. It catalyses the reaction tRNA(Met) + L-methionine + ATP = L-methionyl-tRNA(Met) + AMP + diphosphate. Functionally, is required not only for elongation of protein synthesis but also for the initiation of all mRNA translation through initiator tRNA(fMet) aminoacylation. The chain is Methionine--tRNA ligase 1 from Alkaliphilus oremlandii (strain OhILAs) (Clostridium oremlandii (strain OhILAs)).